The chain runs to 95 residues: Glutamine synthetase and cystathionine beta-lyase binding protein (95 aa).

In terms of assembly, interacts with glutamine synthetase (TTHA1329) and cystathionine beta-lyase (TTHA1620), but proteins do not form a ternary complex.

Binds to glutamine synthetase and cystathionine beta-lyase. May be utilized for the efficient use of nitrogen in the global nitrogen regulation of T.thermophilus. The protein is Glutamine synthetase and cystathionine beta-lyase binding protein of Thermus thermophilus (strain ATCC 27634 / DSM 579 / HB8).